The primary structure comprises 185 residues: Peptidyl-tRNA hydrolase (185 aa).

A tRNA-binding site is contributed by Tyr14. Catalysis depends on His19, which acts as the Proton acceptor. Positions 65, 67, and 113 each coordinate tRNA.

The protein belongs to the PTH family. In terms of assembly, monomer.

The protein resides in the cytoplasm. The enzyme catalyses an N-acyl-L-alpha-aminoacyl-tRNA + H2O = an N-acyl-L-amino acid + a tRNA + H(+). Functionally, hydrolyzes ribosome-free peptidyl-tRNAs (with 1 or more amino acids incorporated), which drop off the ribosome during protein synthesis, or as a result of ribosome stalling. Catalyzes the release of premature peptidyl moieties from peptidyl-tRNA molecules trapped in stalled 50S ribosomal subunits, and thus maintains levels of free tRNAs and 50S ribosomes. This Rickettsia canadensis (strain McKiel) protein is Peptidyl-tRNA hydrolase.